The following is a 298-amino-acid chain: N-acetylmuramic acid 6-phosphate etherase (298 aa).

An SIS domain is found at 55–218 (IHAQVSGGGR…STGLMIKSGK (164 aa)). The active-site Proton donor is Glu83. Glu114 is a catalytic residue.

It belongs to the GCKR-like family. MurNAc-6-P etherase subfamily. In terms of assembly, homodimer.

It carries out the reaction N-acetyl-D-muramate 6-phosphate + H2O = N-acetyl-D-glucosamine 6-phosphate + (R)-lactate. It participates in amino-sugar metabolism; 1,6-anhydro-N-acetylmuramate degradation. It functions in the pathway amino-sugar metabolism; N-acetylmuramate degradation. The protein operates within cell wall biogenesis; peptidoglycan recycling. Specifically catalyzes the cleavage of the D-lactyl ether substituent of MurNAc 6-phosphate, producing GlcNAc 6-phosphate and D-lactate. Together with AnmK, is also required for the utilization of anhydro-N-acetylmuramic acid (anhMurNAc) either imported from the medium or derived from its own cell wall murein, and thus plays a role in cell wall recycling. In Escherichia coli O81 (strain ED1a), this protein is N-acetylmuramic acid 6-phosphate etherase.